The following is a 278-amino-acid chain: uncharacterized protein (278 aa).

Positions 1–32 are cleaved as a signal peptide; that stretch reads MSSASFTTKALSVLAALTAASAPLVAASPAHA. The Peptidase S1 domain occupies 33–236; sequence LANARNVTGS…HAEWIAYYTG (204 aa). A disulfide bond links Cys59 and Cys75. Residues His74, Asp123, and Ser189 each act as charge relay system in the active site.

This sequence belongs to the peptidase S1 family.

The protein resides in the secreted. This is an uncharacterized protein from Corynebacterium glutamicum (strain R).